A 380-amino-acid chain; its full sequence is Probable dual-specificity RNA methyltransferase RlmN (380 aa).

The active-site Proton acceptor is glutamate 123. In terms of domain architecture, Radical SAM core spans 129–362; that stretch reads HEYGNSVCVT…VTIRREQGSD (234 aa). A disulfide bridge links cysteine 136 with cysteine 367. Residues cysteine 143, cysteine 147, and cysteine 150 each contribute to the [4Fe-4S] cluster site. Residues 193 to 194, serine 225, 248 to 250, and asparagine 324 contribute to the S-adenosyl-L-methionine site; these read GE and SLH. Cysteine 367 functions as the S-methylcysteine intermediate in the catalytic mechanism.

Belongs to the radical SAM superfamily. RlmN family. It depends on [4Fe-4S] cluster as a cofactor.

The protein localises to the cytoplasm. It carries out the reaction adenosine(2503) in 23S rRNA + 2 reduced [2Fe-2S]-[ferredoxin] + 2 S-adenosyl-L-methionine = 2-methyladenosine(2503) in 23S rRNA + 5'-deoxyadenosine + L-methionine + 2 oxidized [2Fe-2S]-[ferredoxin] + S-adenosyl-L-homocysteine. It catalyses the reaction adenosine(37) in tRNA + 2 reduced [2Fe-2S]-[ferredoxin] + 2 S-adenosyl-L-methionine = 2-methyladenosine(37) in tRNA + 5'-deoxyadenosine + L-methionine + 2 oxidized [2Fe-2S]-[ferredoxin] + S-adenosyl-L-homocysteine. Specifically methylates position 2 of adenine 2503 in 23S rRNA and position 2 of adenine 37 in tRNAs. The chain is Probable dual-specificity RNA methyltransferase RlmN from Lysinibacillus sphaericus (strain C3-41).